The sequence spans 229 residues: Enolase-phosphatase E1 (229 aa).

Positions 7 and 9 each coordinate Mg(2+). Residues 122-123 (SS) and Lys-161 contribute to the substrate site. Residue Asp-186 participates in Mg(2+) binding.

Belongs to the HAD-like hydrolase superfamily. MasA/MtnC family. As to quaternary structure, monomer. The cofactor is Mg(2+).

Its subcellular location is the cytoplasm. The protein localises to the nucleus. The enzyme catalyses 5-methylsulfanyl-2,3-dioxopentyl phosphate + H2O = 1,2-dihydroxy-5-(methylsulfanyl)pent-1-en-3-one + phosphate. The protein operates within amino-acid biosynthesis; L-methionine biosynthesis via salvage pathway; L-methionine from S-methyl-5-thio-alpha-D-ribose 1-phosphate: step 3/6. It functions in the pathway amino-acid biosynthesis; L-methionine biosynthesis via salvage pathway; L-methionine from S-methyl-5-thio-alpha-D-ribose 1-phosphate: step 4/6. Functionally, bifunctional enzyme that catalyzes the enolization of 2,3-diketo-5-methylthiopentyl-1-phosphate (DK-MTP-1-P) into the intermediate 2-hydroxy-3-keto-5-methylthiopentenyl-1-phosphate (HK-MTPenyl-1-P), which is then dephosphorylated to form the acireductone 1,2-dihydroxy-3-keto-5-methylthiopentene (DHK-MTPene). The sequence is that of Enolase-phosphatase E1 from Clavispora lusitaniae (strain ATCC 42720) (Yeast).